We begin with the raw amino-acid sequence, 115 residues long: Large ribosomal subunit protein bL20 (115 aa).

This sequence belongs to the bacterial ribosomal protein bL20 family.

Functionally, binds directly to 23S ribosomal RNA and is necessary for the in vitro assembly process of the 50S ribosomal subunit. It is not involved in the protein synthesizing functions of that subunit. This is Large ribosomal subunit protein bL20 from Chlorobaculum parvum (strain DSM 263 / NCIMB 8327) (Chlorobium vibrioforme subsp. thiosulfatophilum).